Consider the following 156-residue polypeptide: ATP synthase subunit b (156 aa).

The helical transmembrane segment at 7-27 (IFFQMLVFFVLGWFTMKFVWP) threads the bilayer.

Belongs to the ATPase B chain family. As to quaternary structure, F-type ATPases have 2 components, F(1) - the catalytic core - and F(0) - the membrane proton channel. F(1) has five subunits: alpha(3), beta(3), gamma(1), delta(1), epsilon(1). F(0) has three main subunits: a(1), b(2) and c(10-14). The alpha and beta chains form an alternating ring which encloses part of the gamma chain. F(1) is attached to F(0) by a central stalk formed by the gamma and epsilon chains, while a peripheral stalk is formed by the delta and b chains.

It is found in the cell inner membrane. Functionally, f(1)F(0) ATP synthase produces ATP from ADP in the presence of a proton or sodium gradient. F-type ATPases consist of two structural domains, F(1) containing the extramembraneous catalytic core and F(0) containing the membrane proton channel, linked together by a central stalk and a peripheral stalk. During catalysis, ATP synthesis in the catalytic domain of F(1) is coupled via a rotary mechanism of the central stalk subunits to proton translocation. In terms of biological role, component of the F(0) channel, it forms part of the peripheral stalk, linking F(1) to F(0). This chain is ATP synthase subunit b, found in Bordetella petrii (strain ATCC BAA-461 / DSM 12804 / CCUG 43448).